The primary structure comprises 189 residues: Selenoprotein S (189 aa).

The chain crosses the membrane as a helical span at residues 29–49 (VVLSSYGWYILLGCILIYLLI). The span at 114 to 125 (IETWDRMKEGKS) shows a compositional bias: basic and acidic residues. Residues 114–189 (IETWDRMKEG…RRGPSSGGUG (76 aa)) are disordered. Low complexity predominate over residues 136-147 (PSPSTSTSAATK). The segment covering 148–157 (PKQEKQERKT) has biased composition (basic and acidic residues). A non-standard amino acid (selenocysteine) is located at residue Sec188.

It belongs to the selenoprotein S family.

The protein resides in the endoplasmic reticulum membrane. The protein localises to the cytoplasm. Its function is as follows. Involved in the degradation process of misfolded endoplasmic reticulum (ER) luminal proteins. Participates in the transfer of misfolded proteins from the ER to the cytosol, where they are destroyed by the proteasome in a ubiquitin-dependent manner. This is Selenoprotein S (vimp) from Xenopus tropicalis (Western clawed frog).